We begin with the raw amino-acid sequence, 360 residues long: Phenylalanine--tRNA ligase alpha subunit (360 aa).

Glutamate 260 is a Mg(2+) binding site.

It belongs to the class-II aminoacyl-tRNA synthetase family. Phe-tRNA synthetase alpha subunit type 1 subfamily. As to quaternary structure, tetramer of two alpha and two beta subunits. It depends on Mg(2+) as a cofactor.

The protein resides in the cytoplasm. The enzyme catalyses tRNA(Phe) + L-phenylalanine + ATP = L-phenylalanyl-tRNA(Phe) + AMP + diphosphate + H(+). This is Phenylalanine--tRNA ligase alpha subunit from Paracoccus denitrificans (strain Pd 1222).